We begin with the raw amino-acid sequence, 195 residues long: ATP-dependent Clp protease proteolytic subunit (195 aa).

Residue Ser-98 is the Nucleophile of the active site. Residue His-123 is part of the active site.

Belongs to the peptidase S14 family. In terms of assembly, fourteen ClpP subunits assemble into 2 heptameric rings which stack back to back to give a disk-like structure with a central cavity, resembling the structure of eukaryotic proteasomes.

It localises to the cytoplasm. It carries out the reaction Hydrolysis of proteins to small peptides in the presence of ATP and magnesium. alpha-casein is the usual test substrate. In the absence of ATP, only oligopeptides shorter than five residues are hydrolyzed (such as succinyl-Leu-Tyr-|-NHMec, and Leu-Tyr-Leu-|-Tyr-Trp, in which cleavage of the -Tyr-|-Leu- and -Tyr-|-Trp bonds also occurs).. Its function is as follows. Cleaves peptides in various proteins in a process that requires ATP hydrolysis. Has a chymotrypsin-like activity. Plays a major role in the degradation of misfolded proteins. This is ATP-dependent Clp protease proteolytic subunit from Thermoanaerobacter pseudethanolicus (strain ATCC 33223 / 39E) (Clostridium thermohydrosulfuricum).